Consider the following 595-residue polypeptide: NADPH-dependent diflavin oxidoreductase 1 (595 aa).

Residues 6–150 (VLVLYGSQTG…VIDPWLLSFW (145 aa)) form the Flavodoxin-like domain. FMN-binding positions include 12–17 (SQTGTA), 59–62 (ATTG), 97–106 (LGDSSYPKFN), and aspartate 132. Positions 204–444 (LRPFPAPLVF…WVKKGSLKFP (241 aa)) constitute an FAD-binding FR-type domain. Residues arginine 348, 380–383 (RSFS), and 414–417 (GLCS) each bind FAD. NADP(+)-binding positions include threonine 458, 513–514 (SR), and 519–523 (KVYVQ). Tryptophan 594 is a binding site for FAD.

Belongs to the NADPH-dependent diflavin oxidoreductase NDOR1 family. It in the N-terminal section; belongs to the flavodoxin family. The protein in the C-terminal section; belongs to the flavoprotein pyridine nucleotide cytochrome reductase family. Interacts with ciapin1; as part of the cytosolic iron-sulfur (Fe-S) protein assembly (CIA) machinery. The cofactor is FAD. FMN is required as a cofactor.

It localises to the cytoplasm. It is found in the perinuclear region. It carries out the reaction 2 oxidized [2Fe-2S]-[protein] + NADPH = 2 reduced [2Fe-2S]-[protein] + NADP(+) + H(+). Functionally, NADPH-dependent reductase which is a central component of the cytosolic iron-sulfur (Fe-S) protein assembly (CIA) machinery. Transfers electrons from NADPH via its FAD and FMN prosthetic groups to the [2Fe-2S] cluster of ciapin1, another key component of the CIA machinery. In turn, this reduced cluster provides electrons for assembly of cytosolic iron-sulfur cluster proteins. It can also reduce the [2Fe-2S] cluster of cisd1 and activate this protein implicated in Fe/S cluster repair. The polypeptide is NADPH-dependent diflavin oxidoreductase 1 (Danio rerio (Zebrafish)).